The chain runs to 77 residues: MSRAYLADNDKGWAKKKGADSHATPRPHKQTKMNKLKEIDTDQFLVPPVNAFKLDLDGDIRRGGNKKSERVSGFSGR.

Disordered regions lie at residues 1–34 (MSRA…TKMN) and 56–77 (LDGD…FSGR). The span at 8–20 (DNDKGWAKKKGAD) shows a compositional bias: basic and acidic residues. The span at 25-34 (PRPHKQTKMN) shows a compositional bias: basic residues. Over residues 56–70 (LDGDIRRGGNKKSER) the composition is skewed to basic and acidic residues.

This is an uncharacterized protein from Dictyostelium discoideum (Social amoeba).